The chain runs to 260 residues: MHCTVFFLLIACAKSSYGQTRSVSTAKSESKSDEYSYNSDAIDQSRLLRGAVNPVSENMALRKFIFDMPEMLRPEHFEPIFINPAAVKEVIKDYLAYGEALCGSGYDPRLLALFGVRPTVLKQELMKAKGVTLSVMPSSRKRPRALDEVESEVENFRNVLKDFFIPPTTTNPSKLIPDDIETLVPEHVSAHFNSLVYLMYFAVLHFDSQELATMSSSVLLKYALQKNLLLREKIESGTLGEWERDFRLMRVLNVYKSEQT.

The signal sequence occupies residues 1-18; it reads MHCTVFFLLIACAKSSYG. Positions 46–49 match the RxLR motif; sequence RLLR. The short motif at 136-148 is the Nuclear localuization signal (NLS) element; the sequence is MPSSRKRPRALDE.

This sequence belongs to the RxLR effector family.

The protein resides in the secreted. It localises to the host nucleus. In terms of biological role, secreted effector that triggers a robust hypersensitive response (HR) in Lactuca serriola LS102. The response to BLN06 was visible as strong necrosis. Although effector recognition is frequently associated with single dominant R gene loci, the recognition of BLR38 requires 2 unlinked loci that display incomplete dominance. The polypeptide is RxLR effector protein BLR38 (Bremia lactucae (Lettuce downy mildew)).